We begin with the raw amino-acid sequence, 283 residues long: MINYYLLLTKPGIILGNLVTVMAGFLLASKGQFQFGLFFSTILGLAFIMASGCVFNNYIDLEKDRLMKRTQNRPLVIGVIFEKQAIVFGLALAIVGAIILYFYTNLLTLVIAELGFIIYVFFYSIWKSRTVYGTAIGSLAGAVPPLVGYCAVSNQLDLGAFILFAMMVFWQMPHFFSIAIYRLQDYSAANIPVLPLKKGIQITKIRILLYIIIFTLTSSLLTFFHFTGSLYLILTIGLGLTWLLMGLRGLKTSNDQQWAQQMFRFSLVIISVLSLTIPFDLVN.

9 helical membrane passes run 6–26 (LLLTKPGIILGNLVTVMAGFL), 35–55 (FGLFFSTILGLAFIMASGCVF), 85–105 (AIVFGLALAIVGAIILYFYTN), 106–126 (LLTLVIAELGFIIYVFFYSIW), 131–151 (VYGTAIGSLAGAVPPLVGYCA), 160–180 (AFILFAMMVFWQMPHFFSIAI), 207–227 (ILLYIIIFTLTSSLLTFFHFT), 230–250 (LYLILTIGLGLTWLLMGLRGL), and 262–282 (MFRFSLVIISVLSLTIPFDLV).

The protein belongs to the UbiA prenyltransferase family. Protoheme IX farnesyltransferase subfamily.

Its subcellular location is the cell inner membrane. The enzyme catalyses heme b + (2E,6E)-farnesyl diphosphate + H2O = Fe(II)-heme o + diphosphate. It participates in porphyrin-containing compound metabolism; heme O biosynthesis; heme O from protoheme: step 1/1. In terms of biological role, converts heme B (protoheme IX) to heme O by substitution of the vinyl group on carbon 2 of heme B porphyrin ring with a hydroxyethyl farnesyl side group. In Protochlamydia amoebophila (strain UWE25), this protein is Protoheme IX farnesyltransferase.